A 66-amino-acid chain; its full sequence is Large ribosomal subunit protein eL24 (66 aa).

Zn(2+)-binding residues include C6, C9, C32, and C36. A C4-type zinc finger spans residues 6–36 (CSFCGKSIEPASGFLYVRKDGSVLNFCSRKC).

This sequence belongs to the eukaryotic ribosomal protein eL24 family. Part of the 50S ribosomal subunit. Forms a cluster with proteins L3 and L14. It depends on Zn(2+) as a cofactor.

In terms of biological role, binds to the 23S rRNA. The protein is Large ribosomal subunit protein eL24 of Picrophilus torridus (strain ATCC 700027 / DSM 9790 / JCM 10055 / NBRC 100828 / KAW 2/3).